Reading from the N-terminus, the 250-residue chain is 2,3-bisphosphoglycerate-dependent phosphoglycerate mutase (250 aa).

Substrate contacts are provided by residues 10–17 (RHGESQWN), 23–24 (TG), Arg-62, 89–92 (ERHY), Lys-100, 116–117 (RR), and 185–186 (GN). His-11 (tele-phosphohistidine intermediate) is an active-site residue. Glu-89 (proton donor/acceptor) is an active-site residue.

It belongs to the phosphoglycerate mutase family. BPG-dependent PGAM subfamily. Homodimer.

It carries out the reaction (2R)-2-phosphoglycerate = (2R)-3-phosphoglycerate. Its pathway is carbohydrate degradation; glycolysis; pyruvate from D-glyceraldehyde 3-phosphate: step 3/5. Catalyzes the interconversion of 2-phosphoglycerate and 3-phosphoglycerate. This chain is 2,3-bisphosphoglycerate-dependent phosphoglycerate mutase, found in Pectobacterium carotovorum subsp. carotovorum (strain PC1).